Consider the following 259-residue polypeptide: Dysbindin domain-containing protein 2 (259 aa).

Disordered regions lie at residues 27-56 (SCERVSPPPPLPHFRLPPLPRSRLPGPVSR) and 174-259 (ADVF…GACS). The segment covering 32-46 (SPPPPLPHFRLPPLP) has biased composition (pro residues). Residues 205 to 223 (TSDRTTSRTSSSSSSDSST) are compositionally biased toward low complexity. A phosphoserine mark is found at Ser217 and Ser218. Phosphothreonine is present on Thr237. A Phosphoserine modification is found at Ser242.

This sequence belongs to the dysbindin family. In terms of assembly, monomer. Interacts with CSNK1D and CSNK1E. Detected in brain.

May modulate the activity of casein kinase-1. Inhibits CSNK1D autophosphorylation (in vitro). The polypeptide is Dysbindin domain-containing protein 2 (DBNDD2) (Homo sapiens (Human)).